We begin with the raw amino-acid sequence, 356 residues long: Heparan sulfate 2-O-sulfotransferase 1 (356 aa).

Residues 1 to 11 (MGLLRIMMPPK) lie on the Cytoplasmic side of the membrane. A helical; Signal-anchor for type II membrane protein transmembrane segment spans residues 12 to 28 (LQLLAVVAFAVAMLFLE). A coiled-coil region spans residues 24 to 51 (MLFLENQIQKLEESRAKLERAIARHEVR). Topologically, residues 29–356 (NQIQKLEESR…FYEKIYPKSN (328 aa)) are lumenal. Adenosine 3',5'-bisphosphate is bound by residues lysine 83, threonine 84, alanine 85, serine 86, threonine 87, and serine 88. 2 N-linked (GlcNAc...) asparagine glycosylation sites follow: asparagine 108 and asparagine 127. Residues histidine 140 and histidine 142 contribute to the active site. Adenosine 3',5'-bisphosphate contacts are provided by arginine 164 and serine 172. Disulfide bonds link cysteine 201/cysteine 209 and cysteine 222/cysteine 228. The adenosine 3',5'-bisphosphate site is built by tyrosine 279, serine 285, threonine 290, and lysine 293.

The protein belongs to the sulfotransferase 3 family. As to quaternary structure, homotrimer. Interacts with the C5-epimerase GLCE. N-glycosylated.

It is found in the golgi apparatus membrane. Functionally, catalyzes the transfer of a sulfo group from 3'-phospho-5'-adenylyl sulfate (PAPS) to the 2-OH position of iduronic acid (IdoA) or glucuronic acid (GlcA) within the heparan sulfate (HS) chain and participates in HS biosynthesis. Required for metanephric development of kidney formation, suggesting that 2-O-sulfation within HS is essential for signaling between ureteric bud and metanephric mesenchyme. The sequence is that of Heparan sulfate 2-O-sulfotransferase 1 from Cricetulus griseus (Chinese hamster).